We begin with the raw amino-acid sequence, 421 residues long: Zinc metalloproteinase-disintegrin-like lachestatin-2 (421 aa).

The region spanning 10–206 (KYVKLVLVAD…DMPQCILEKP (197 aa)) is the Peptidase M12B domain. Cystine bridges form between C121/C201, C161/C185, and C163/C168. H146 contacts Zn(2+). The active site involves E147. Zn(2+) is bound by residues H150 and H156. The Disintegrin domain occupies 214 to 299 (PPVCGNYFVE…AECTDRFQRN (86 aa)). Ca(2+) contacts are provided by V216, N219, F221, E223, E226, and D229. Cystine bridges form between C217–C246, C228–C241, C230–C236, C240–C263, C254–C260, C259–C285, C272–C292, C279–C310, C303–C315, C322–C372, C337–C383, C350–C360, C367–C409, and C403–C414. The D/ECD-tripeptide motif lies at 278-280 (ECD). Ca(2+) contacts are provided by D280, M281, D283, D294, and R295. An N-linked (GlcNAc...) asparagine glycan is attached at N312.

This sequence belongs to the venom metalloproteinase (M12B) family. P-III subfamily. P-IIIc sub-subfamily. In terms of assembly, homodimer; disulfide-linked. Zn(2+) is required as a cofactor. As to expression, expressed by the venom gland.

The protein resides in the secreted. Functionally, snake venom zinc metalloprotease that induces apoptosis in vascular endothelial cells (VEC), without degrading the extracellular matrix (it cannot cleave collagen) or inhibiting adhesion of VEC. Has also fibrinogenolytic and hemorrhagic activities. The chain is Zinc metalloproteinase-disintegrin-like lachestatin-2 from Lachesis muta rhombeata (Bushmaster).